Reading from the N-terminus, the 237-residue chain is METKHLRKLLQLYQACGGEQELTKTVQNVTSSPLTPTPPPQPPSALDSTMALTIFILLVALFFMGFFSVYFRHFADSSSSTVDISSMPRTRSSRMSPRRLSTSVVVSRPYSFRRGLDSQAVRSLPVYRYTKAAKQRNEDCVICLSDFEEGETVKVIPHCGHVFHVDCVDTWLSSYVTCPLCRSNQLFSDKDLGMQEPPDQDSAEEHDTCDGVDTCVRRCSSCSSLGQRTGLERSLSL.

Residues 51-71 (ALTIFILLVALFFMGFFSVYF) traverse the membrane as a helical segment. The segment at 140–182 (CVICLSDFEEGETVKVIPHCGHVFHVDCVDTWLSSYVTCPLCR) adopts an RING-type; atypical zinc-finger fold.

Belongs to the RING-type zinc finger family. ATL subfamily.

Its subcellular location is the membrane. The catalysed reaction is S-ubiquitinyl-[E2 ubiquitin-conjugating enzyme]-L-cysteine + [acceptor protein]-L-lysine = [E2 ubiquitin-conjugating enzyme]-L-cysteine + N(6)-ubiquitinyl-[acceptor protein]-L-lysine.. The protein operates within protein modification; protein ubiquitination. The polypeptide is RING-H2 finger protein ATL57 (ATL57) (Arabidopsis thaliana (Mouse-ear cress)).